Reading from the N-terminus, the 506-residue chain is Arabinose import ATP-binding protein AraG (506 aa).

ABC transporter domains are found at residues 10-245 (LEFC…MVGR) and 253-501 (YRSR…MLGN). 42-49 (GENGAGKS) is an ATP binding site.

This sequence belongs to the ABC transporter superfamily. Arabinose importer (TC 3.A.1.2.2) family. The complex is composed of two ATP-binding proteins (AraG), two transmembrane proteins (AraH) and a solute-binding protein (AraF).

The protein localises to the cell inner membrane. The enzyme catalyses L-arabinose(out) + ATP + H2O = L-arabinose(in) + ADP + phosphate + H(+). In terms of biological role, part of the ABC transporter complex AraFGH involved in arabinose import. Responsible for energy coupling to the transport system. The polypeptide is Arabinose import ATP-binding protein AraG (Vibrio parahaemolyticus serotype O3:K6 (strain RIMD 2210633)).